We begin with the raw amino-acid sequence, 829 residues long: Exocyst complex component SEC10b (829 aa).

Residues 244–266 adopt a coiled-coil conformation; it reads RGLEVAVANLQDYCNELENRLLS.

Belongs to the SEC10 family. In terms of assembly, the exocyst complex is composed of SEC3, SEC5, SEC6, SEC8, SEC10, EXO70A1 and EXO84B. Interacts with EXO84B. Binds to EXO70E2. Expressed in seedlings, roots, leaves and flowers.

The protein localises to the cytoplasm. It is found in the cytosol. Its subcellular location is the secreted. It localises to the extracellular exosome. Component of the exocyst complex involved in the docking of exocytic vesicles with fusion sites on the plasma membrane during regulated or polarized secretion. Involved in polarized cell growth and organ morphogenesis. During cytokinesis, involved in cell plate initiation, cell plate maturation and formation of new primary cell wall. This chain is Exocyst complex component SEC10b, found in Arabidopsis thaliana (Mouse-ear cress).